The sequence spans 883 residues: Phosphoenolpyruvate carboxylase (883 aa).

Catalysis depends on residues histidine 138 and lysine 546.

The protein belongs to the PEPCase type 1 family. As to quaternary structure, homotetramer. Mg(2+) is required as a cofactor.

It carries out the reaction oxaloacetate + phosphate = phosphoenolpyruvate + hydrogencarbonate. Its activity is regulated as follows. The enzyme has distinct binding sites for each of the allosteric effectors such as acetyl-CoA, fructose 1,6-bisphosphate, guanosine 3'-diphosphate 5'-diphosphate, long chain fatty acids, and L-aspartate. Its function is as follows. Forms oxaloacetate, a four-carbon dicarboxylic acid source for the tricarboxylic acid cycle. This is Phosphoenolpyruvate carboxylase (ppc) from Salmonella typhi.